The sequence spans 327 residues: Microtubule-associated protein RP/EB family member 2 (327 aa).

The interval M1–D21 is disordered. At P2 the chain carries N-acetylalanine. Residue S9 is modified to Phosphoserine. The Calponin-homology (CH) domain maps to T57 to D159. Y167 bears the Phosphotyrosine mark. Disordered regions lie at residues E171 to L240 and A299 to Y327. Positions Q187–Y327 are DCTN1-binding. Over residues S200–S234 the composition is skewed to low complexity. A phosphoserine mark is found at S219 and S236. Residues S236–H306 form the EB1 C-terminal domain. Residues E259–E302 form an APC-binding region. Over residues S300 to H317 the composition is skewed to basic and acidic residues. Residues E318–Y327 are compositionally biased toward low complexity.

The protein belongs to the MAPRE family. Interacts with DCTN1. Interacts with APC (via C-terminal). Interacts with monomeric and polymerized tubulin. Interacts with SLAIN1. Interacts (via the N-terminal region) with BAG1. Interacts with ASB14. Interacts with HAX1; this interaction is essential for epidermal cell migration. Phosphorylated at Ser-236 by CK2 leading to enhanced cell adhesion. Phosphorylated by CDK1 and AURKB during mitosis reduces the binding affinity of MAPRE2 for microtubules. In terms of processing, ubiquitinated in an ASB14-dependent manner; leading to proteasomal degradation. Expressed in different tumor cell lines. Up-regulated in activated B- and T-lymphocytes.

The protein resides in the cytoplasm. The protein localises to the cytoskeleton. Adapter protein that is involved in microtubule polymerization, and spindle function by stabilizing microtubules and anchoring them at centrosomes. Therefore, ensures mitotic progression and genome stability. Acts as a central regulator of microtubule reorganization in apico-basal epithelial differentiation. Plays a role during oocyte meiosis by regulating microtubule dynamics. Participates in neurite growth by interacting with plexin B3/PLXNB3 and microtubule reorganization during apico-basal epithelial differentiation. Also plays an essential role for cell migration and focal adhesion dynamics. Mechanistically, recruits HAX1 to microtubules in order to regulate focal adhesion dynamics. In Homo sapiens (Human), this protein is Microtubule-associated protein RP/EB family member 2 (MAPRE2).